Here is a 445-residue protein sequence, read N- to C-terminus: ATPase PAAT (445 aa).

A phosphoserine mark is found at serine 177, serine 182, serine 254, and serine 302. The segment at 426–445 (PTGIPLRHYDSGERLSNGER) is disordered. Over residues 432 to 445 (RHYDSGERLSNGER) the composition is skewed to basic and acidic residues.

As to quaternary structure, homodimer. Interacts with ABCB7, ABCB8/MITOSUR and ABCB10.

It localises to the cytoplasm. Its subcellular location is the mitochondrion. It catalyses the reaction ATP + H2O = ADP + phosphate + H(+). Functionally, ATPase that regulates mitochondrial ABC transporters ABCB7, ABCB8/MITOSUR and ABCB10. Regulates mitochondrial ferric concentration and heme biosynthesis and plays a role in the maintenance of mitochondrial homeostasis and cell survival. The chain is ATPase PAAT from Homo sapiens (Human).